We begin with the raw amino-acid sequence, 471 residues long: ATP synthase subunit beta (471 aa).

156 to 163 (GGAGVGKT) serves as a coordination point for ATP.

This sequence belongs to the ATPase alpha/beta chains family. As to quaternary structure, F-type ATPases have 2 components, CF(1) - the catalytic core - and CF(0) - the membrane proton channel. CF(1) has five subunits: alpha(3), beta(3), gamma(1), delta(1), epsilon(1). CF(0) has three main subunits: a(1), b(2) and c(9-12). The alpha and beta chains form an alternating ring which encloses part of the gamma chain. CF(1) is attached to CF(0) by a central stalk formed by the gamma and epsilon chains, while a peripheral stalk is formed by the delta and b chains.

The protein localises to the cell membrane. The catalysed reaction is ATP + H2O + 4 H(+)(in) = ADP + phosphate + 5 H(+)(out). Produces ATP from ADP in the presence of a proton gradient across the membrane. The catalytic sites are hosted primarily by the beta subunits. This chain is ATP synthase subunit beta, found in Staphylococcus carnosus (strain TM300).